The primary structure comprises 251 residues: Phosphoribosylaminoimidazole-succinocarboxamide synthase (251 aa).

Belongs to the SAICAR synthetase family.

It carries out the reaction 5-amino-1-(5-phospho-D-ribosyl)imidazole-4-carboxylate + L-aspartate + ATP = (2S)-2-[5-amino-1-(5-phospho-beta-D-ribosyl)imidazole-4-carboxamido]succinate + ADP + phosphate + 2 H(+). It functions in the pathway purine metabolism; IMP biosynthesis via de novo pathway; 5-amino-1-(5-phospho-D-ribosyl)imidazole-4-carboxamide from 5-amino-1-(5-phospho-D-ribosyl)imidazole-4-carboxylate: step 1/2. This chain is Phosphoribosylaminoimidazole-succinocarboxamide synthase, found in Ruegeria pomeroyi (strain ATCC 700808 / DSM 15171 / DSS-3) (Silicibacter pomeroyi).